We begin with the raw amino-acid sequence, 314 residues long: Zinc transporter ZIP3 (314 aa).

Topologically, residues 1 to 3 are extracellular; it reads MVK. A helical transmembrane segment spans residues 4–24; the sequence is LLVAKILCMVGMFFFMLLGSL. Residues 25–42 are Cytoplasmic-facing; the sequence is LPVKIIEMDFEKAHRSKK. The chain crosses the membrane as a helical span at residues 43-63; that stretch reads ILSLCNTFGGGVFLATCFNAL. At 64-85 the chain is on the extracellular side; sequence LPAVREKLKEVLTLAHISTDYP. A helical membrane pass occupies residues 86–106; the sequence is LAETIMLLGFFMTVFLEQLVL. Residues 107-169 are Cytoplasmic-facing; that stretch reads TFRKERPAFI…QELSRSSPLR (63 aa). Phosphoserine is present on residues serine 125 and serine 129. A helical transmembrane segment spans residues 170-190; sequence LLSLVFALSAHSVFEGLALGL. The Extracellular portion of the chain corresponds to 191 to 196; that stretch reads QEEGEK. Residues 197–217 traverse the membrane as a helical segment; sequence VVSLFVGVAIHETLVAVALGI. The Cytoplasmic segment spans residues 218-229; that stretch reads NMARSAMALRDA. Residues 230–250 form a helical membrane-spanning segment; it reads AKLAVTVSAMIPLGISLGLGI. Topologically, residues 251 to 262 are extracellular; it reads DSAQGMPSSVAS. The helical transmembrane segment at 263 to 283 threads the bilayer; sequence VLLQGLAGGTFLFVTFFEILA. Residues 284-292 lie on the Cytoplasmic side of the membrane; sequence KELEEKSDR. A helical transmembrane segment spans residues 293-313; it reads LLKVLFLVLGYTVLAGMVFIK. Tryptophan 314 is a topological domain (extracellular).

Belongs to the ZIP transporter (TC 2.A.5) family.

It is found in the cell membrane. Its subcellular location is the apical cell membrane. It catalyses the reaction Zn(2+)(in) = Zn(2+)(out). Functionally, transporter for the divalent cation Zn(2+). Mediates the influx of Zn(2+) into cells from extracellular space. Controls Zn(2+) accumulation into dentate gyrus granule cells in the hippocampus. Mediates Zn(2+) reuptake from the secreted milk within the alveolar lumen. The protein is Zinc transporter ZIP3 (SLC39A3) of Bos taurus (Bovine).